The primary structure comprises 129 residues: Small ribosomal subunit protein uS13m (129 aa).

A disordered region spans residues 92 to 129 (HQDGSPLRGQRTHTNARTARKQIRKGNERRLPKEQATD). A compositionally biased stretch (basic and acidic residues) spans 116 to 129 (KGNERRLPKEQATD).

The protein belongs to the universal ribosomal protein uS13 family. Part of the small ribosomal subunit.

The protein resides in the mitochondrion. In terms of biological role, located at the top of the head of the small subunit, it contacts several helices of the 18S rRNA. The protein is Small ribosomal subunit protein uS13m (RPS13) of Zea mays (Maize).